Here is a 302-residue protein sequence, read N- to C-terminus: 1,2-dihydroxynaphthalene dioxygenase (302 aa).

VOC domains follow at residues 9–124 and 149–270; these read ELGY…IFWG and GLGH…PGWR. Position 152 (histidine 152) interacts with Fe cation. Substrate-binding positions include histidine 152, 199–200, histidine 215, and tyrosine 256; that span reads DH. Histidine 215 is a binding site for Fe cation. Glutamate 266 serves as a coordination point for Fe cation.

This sequence belongs to the extradiol ring-cleavage dioxygenase family. Requires Fe(2+) as cofactor.

It carries out the reaction naphthalene-1,2-diol + O2 = 2-hydroxychromene-2-carboxylate + H(+). The protein operates within aromatic compound metabolism; naphthalene degradation. In terms of biological role, involved in the naphthalene catabolic pathway. Catalyzes the meta-cleavage of 1,2-dihydroxynaphthalene (1,2-DHN) to yield 2-hydroxychromene-2-carboxylic acid. The sequence is that of 1,2-dihydroxynaphthalene dioxygenase (nahC) from Pseudomonas putida (Arthrobacter siderocapsulatus).